A 248-amino-acid polypeptide reads, in one-letter code: Triosephosphate isomerase (248 aa).

9-11 (NWK) contacts substrate. Residue histidine 94 is the Electrophile of the active site. Glutamate 166 functions as the Proton acceptor in the catalytic mechanism. Substrate contacts are provided by residues glycine 172, serine 211, and 232-233 (GG).

It belongs to the triosephosphate isomerase family. As to quaternary structure, homodimer.

The protein localises to the cytoplasm. The catalysed reaction is D-glyceraldehyde 3-phosphate = dihydroxyacetone phosphate. The protein operates within carbohydrate biosynthesis; gluconeogenesis. It functions in the pathway carbohydrate degradation; glycolysis; D-glyceraldehyde 3-phosphate from glycerone phosphate: step 1/1. In terms of biological role, involved in the gluconeogenesis. Catalyzes stereospecifically the conversion of dihydroxyacetone phosphate (DHAP) to D-glyceraldehyde-3-phosphate (G3P). This is Triosephosphate isomerase from Vesicomyosocius okutanii subsp. Calyptogena okutanii (strain HA).